The sequence spans 304 residues: UDP-3-O-acyl-N-acetylglucosamine deacetylase (304 aa).

Zn(2+) is bound by residues H78, H237, and D241. H264 serves as the catalytic Proton donor.

It belongs to the LpxC family. The cofactor is Zn(2+).

The enzyme catalyses a UDP-3-O-[(3R)-3-hydroxyacyl]-N-acetyl-alpha-D-glucosamine + H2O = a UDP-3-O-[(3R)-3-hydroxyacyl]-alpha-D-glucosamine + acetate. It participates in glycolipid biosynthesis; lipid IV(A) biosynthesis; lipid IV(A) from (3R)-3-hydroxytetradecanoyl-[acyl-carrier-protein] and UDP-N-acetyl-alpha-D-glucosamine: step 2/6. Functionally, catalyzes the hydrolysis of UDP-3-O-myristoyl-N-acetylglucosamine to form UDP-3-O-myristoylglucosamine and acetate, the committed step in lipid A biosynthesis. In Legionella pneumophila (strain Paris), this protein is UDP-3-O-acyl-N-acetylglucosamine deacetylase.